A 232-amino-acid chain; its full sequence is Heptaprenylglyceryl phosphate synthase (232 aa).

Residue Lys-12 participates in sn-glycerol 1-phosphate binding. Residues Asp-14 and Thr-40 each coordinate Mg(2+). Residues 159–164 (YLEYSG), Gly-189, and 209–210 (GN) each bind sn-glycerol 1-phosphate.

It belongs to the GGGP/HepGP synthase family. Group I subfamily. In terms of assembly, homodimer. Mg(2+) is required as a cofactor.

It carries out the reaction sn-glycerol 1-phosphate + all-trans-heptaprenyl diphosphate = 3-heptaprenyl-sn-glycero-1-phosphate + diphosphate. Its pathway is membrane lipid metabolism; glycerophospholipid metabolism. Functionally, prenyltransferase that catalyzes in vivo the transfer of the heptaprenyl moiety of heptaprenyl pyrophosphate (HepPP; 35 carbon atoms) to the C3 hydroxyl of sn-glycerol-1-phosphate (G1P), producing heptaprenylglyceryl phosphate (HepGP). This reaction is an ether-bond-formation step in the biosynthesis of archaea-type G1P-based membrane lipids found in Bacillales. This chain is Heptaprenylglyceryl phosphate synthase, found in Shouchella clausii (strain KSM-K16) (Alkalihalobacillus clausii).